The chain runs to 302 residues: N-acetyl-D-glucosamine kinase (302 aa).

ATP is bound by residues 4–11 and 133–140; these read GFDVGGTK and GFGGGLVF. Positions 157, 177, 179, and 184 each coordinate Zn(2+).

This sequence belongs to the ROK (NagC/XylR) family. NagK subfamily.

The enzyme catalyses N-acetyl-D-glucosamine + ATP = N-acetyl-D-glucosamine 6-phosphate + ADP + H(+). The protein operates within cell wall biogenesis; peptidoglycan recycling. Catalyzes the phosphorylation of N-acetyl-D-glucosamine (GlcNAc) derived from cell-wall degradation, yielding GlcNAc-6-P. The protein is N-acetyl-D-glucosamine kinase of Aliivibrio salmonicida (strain LFI1238) (Vibrio salmonicida (strain LFI1238)).